A 293-amino-acid chain; its full sequence is 4-hydroxy-tetrahydrodipicolinate synthase (293 aa).

Pyruvate is bound at residue Thr45. Tyr133 serves as the catalytic Proton donor/acceptor. The Schiff-base intermediate with substrate role is filled by Lys162. Ile204 serves as a coordination point for pyruvate.

Belongs to the DapA family. In terms of assembly, homotetramer; dimer of dimers.

It localises to the cytoplasm. It catalyses the reaction L-aspartate 4-semialdehyde + pyruvate = (2S,4S)-4-hydroxy-2,3,4,5-tetrahydrodipicolinate + H2O + H(+). Its pathway is amino-acid biosynthesis; L-lysine biosynthesis via DAP pathway; (S)-tetrahydrodipicolinate from L-aspartate: step 3/4. Catalyzes the condensation of (S)-aspartate-beta-semialdehyde [(S)-ASA] and pyruvate to 4-hydroxy-tetrahydrodipicolinate (HTPA). This Brucella abortus biovar 1 (strain 9-941) protein is 4-hydroxy-tetrahydrodipicolinate synthase.